Reading from the N-terminus, the 111-residue chain is Flagellar hook-basal body complex protein FliE (111 aa).

The protein belongs to the FliE family.

The protein resides in the bacterial flagellum basal body. In Clostridium acetobutylicum (strain ATCC 824 / DSM 792 / JCM 1419 / IAM 19013 / LMG 5710 / NBRC 13948 / NRRL B-527 / VKM B-1787 / 2291 / W), this protein is Flagellar hook-basal body complex protein FliE.